We begin with the raw amino-acid sequence, 254 residues long: 5'-nucleotidase SurE (254 aa).

A divalent metal cation is bound by residues aspartate 8, aspartate 9, serine 40, and asparagine 93.

The protein belongs to the SurE nucleotidase family. A divalent metal cation is required as a cofactor.

It is found in the cytoplasm. The catalysed reaction is a ribonucleoside 5'-phosphate + H2O = a ribonucleoside + phosphate. In terms of biological role, nucleotidase that shows phosphatase activity on nucleoside 5'-monophosphates. The sequence is that of 5'-nucleotidase SurE from Rhizorhabdus wittichii (strain DSM 6014 / CCUG 31198 / JCM 15750 / NBRC 105917 / EY 4224 / RW1) (Sphingomonas wittichii).